Here is a 307-residue protein sequence, read N- to C-terminus: 4-hydroxythreonine-4-phosphate dehydrogenase (307 aa).

Residues H126 and T127 each coordinate substrate. A divalent metal cation contacts are provided by H156, H195, and H251. 3 residues coordinate substrate: K259, N268, and R277.

It belongs to the PdxA family. In terms of assembly, homodimer. It depends on Zn(2+) as a cofactor. The cofactor is Mg(2+). Requires Co(2+) as cofactor.

It localises to the cytoplasm. The enzyme catalyses 4-(phosphooxy)-L-threonine + NAD(+) = 3-amino-2-oxopropyl phosphate + CO2 + NADH. The protein operates within cofactor biosynthesis; pyridoxine 5'-phosphate biosynthesis; pyridoxine 5'-phosphate from D-erythrose 4-phosphate: step 4/5. Functionally, catalyzes the NAD(P)-dependent oxidation of 4-(phosphooxy)-L-threonine (HTP) into 2-amino-3-oxo-4-(phosphooxy)butyric acid which spontaneously decarboxylates to form 3-amino-2-oxopropyl phosphate (AHAP). The sequence is that of 4-hydroxythreonine-4-phosphate dehydrogenase from Helicobacter pylori (strain J99 / ATCC 700824) (Campylobacter pylori J99).